The primary structure comprises 84 residues: CDC42 small effector protein 2 (84 aa).

S-palmitoyl cysteine attachment occurs at residues cysteine 10 and cysteine 11. The CRIB domain occupies 29 to 42 (IGEPTNFVHTAHVG). Phosphoserine occurs at positions 43 and 52.

This sequence belongs to the CDC42SE/SPEC family. Interacts with CDC42 (in GTP-bound form). Interacts weakly with RAC1 and not at all with RHOA.

The protein localises to the cytoplasm. It localises to the cytoskeleton. It is found in the cell membrane. The protein resides in the cell projection. Its subcellular location is the phagocytic cup. In terms of biological role, probably involved in the organization of the actin cytoskeleton by acting downstream of CDC42, inducing actin filament assembly. Alters CDC42-induced cell shape changes. In activated T-cells, may play a role in CDC42-mediated F-actin accumulation at the immunological synapse. May play a role in early contractile events in phagocytosis in macrophages. In Bos taurus (Bovine), this protein is CDC42 small effector protein 2 (CDC42SE2).